We begin with the raw amino-acid sequence, 394 residues long: Immune-associated nucleotide-binding protein 12 (394 aa).

The region spanning K45–R251 is the AIG1-type G domain. A G1 region spans residues G54–S61. Residues G54–A62 and S75 contribute to the GTP site. The segment at G81–A85 is G2. Positions D103–G106 are G3. A G4 region spans residues T173 to D176. Residues R210–R212 are G5. GTP is bound at residue N211. Residues N289–S387 are a coiled coil.

It belongs to the TRAFAC class TrmE-Era-EngA-EngB-Septin-like GTPase superfamily. AIG1/Toc34/Toc159-like paraseptin GTPase family. IAN subfamily.

The protein is Immune-associated nucleotide-binding protein 12 of Arabidopsis thaliana (Mouse-ear cress).